The following is an 81-amino-acid chain: Toxin TdNa10 (81 aa).

Residues 1-20 (MWTFAIVLAFLLIGLDEGEA) form the signal peptide. In terms of domain architecture, LCN-type CS-alpha/beta spans 21-81 (LDGYPLSKNN…KMYPGELPCH (61 aa)). 4 cysteine pairs are disulfide-bonded: Cys-32–Cys-80, Cys-36–Cys-57, Cys-42–Cys-62, and Cys-46–Cys-64.

Belongs to the long (4 C-C) scorpion toxin superfamily. Sodium channel inhibitor family. Beta subfamily. As to expression, expressed by the venom gland.

The protein localises to the secreted. In terms of biological role, alpha toxins bind voltage-independently at site-3 of sodium channels (Nav) and inhibit the inactivation of the activated channels, thereby blocking neuronal transmission. This toxin binds, in vitro, to sodium channels and inhibits the inactivation of the activated channels. Seems not toxic to mice, crickets and sweet-water shrimps. This is Toxin TdNa10 from Tityus discrepans (Venezuelan scorpion).